Here is a 575-residue protein sequence, read N- to C-terminus: 5-aminolevulinate synthase, mitochondrial (575 aa).

Residues 1–55 (MESITRVSMSVCPFVKSSSAQALRQLSKNSALTSQARQCPFMGAALNAKESTRSY) constitute a mitochondrion transit peptide. Residues Arg-124, Ser-237, and Lys-256 each contribute to the substrate site. The pyridoxal 5'-phosphate site is built by Ser-289, His-317, and Thr-361. Lys-364 is a catalytic residue. N6-(pyridoxal phosphate)lysine is present on Lys-364. Thr-393 and Thr-394 together coordinate pyridoxal 5'-phosphate. Thr-479 serves as a coordination point for substrate.

It belongs to the class-II pyridoxal-phosphate-dependent aminotransferase family. As to quaternary structure, homodimer. Pyridoxal 5'-phosphate serves as cofactor.

The protein localises to the mitochondrion matrix. It carries out the reaction succinyl-CoA + glycine + H(+) = 5-aminolevulinate + CO2 + CoA. It functions in the pathway porphyrin-containing compound metabolism; protoporphyrin-IX biosynthesis; 5-aminolevulinate from glycine: step 1/1. Catalyzes the synthesis of 5-aminolevulinate (ALA) from succinyl-CoA and glycine, the first and rate-limiting step in heme biosynthesis. This chain is 5-aminolevulinate synthase, mitochondrial (HEM1), found in Debaryomyces hansenii (strain ATCC 36239 / CBS 767 / BCRC 21394 / JCM 1990 / NBRC 0083 / IGC 2968) (Yeast).